A 270-amino-acid chain; its full sequence is Formamidopyrimidine-DNA glycosylase (270 aa).

Pro-2 functions as the Schiff-base intermediate with DNA in the catalytic mechanism. The active-site Proton donor is the Glu-3. Lys-57 (proton donor; for beta-elimination activity) is an active-site residue. Positions 90, 109, and 151 each coordinate DNA. An FPG-type zinc finger spans residues 236-270 (RVYGRKGQACEVCESEIQSVTLGQRNTFFCEQCQK). Arg-260 functions as the Proton donor; for delta-elimination activity in the catalytic mechanism.

The protein belongs to the FPG family. Monomer. Zn(2+) is required as a cofactor.

It catalyses the reaction Hydrolysis of DNA containing ring-opened 7-methylguanine residues, releasing 2,6-diamino-4-hydroxy-5-(N-methyl)formamidopyrimidine.. It carries out the reaction 2'-deoxyribonucleotide-(2'-deoxyribose 5'-phosphate)-2'-deoxyribonucleotide-DNA = a 3'-end 2'-deoxyribonucleotide-(2,3-dehydro-2,3-deoxyribose 5'-phosphate)-DNA + a 5'-end 5'-phospho-2'-deoxyribonucleoside-DNA + H(+). In terms of biological role, involved in base excision repair of DNA damaged by oxidation or by mutagenic agents. Acts as a DNA glycosylase that recognizes and removes damaged bases. Has a preference for oxidized purines, such as 7,8-dihydro-8-oxoguanine (8-oxoG). Has AP (apurinic/apyrimidinic) lyase activity and introduces nicks in the DNA strand. Cleaves the DNA backbone by beta-delta elimination to generate a single-strand break at the site of the removed base with both 3'- and 5'-phosphates. This chain is Formamidopyrimidine-DNA glycosylase, found in Pseudoalteromonas atlantica (strain T6c / ATCC BAA-1087).